A 274-amino-acid chain; its full sequence is Thiamine kinase (274 aa).

It belongs to the thiamine kinase family.

It catalyses the reaction thiamine + ATP = thiamine phosphate + ADP + H(+). It participates in cofactor biosynthesis; thiamine diphosphate biosynthesis; thiamine phosphate from thiamine: step 1/1. Functionally, catalyzes the ATP-dependent phosphorylation of thiamine to thiamine phosphate. Is involved in thiamine salvage. This Shigella boydii serotype 4 (strain Sb227) protein is Thiamine kinase.